A 172-amino-acid polypeptide reads, in one-letter code: Ribosome maturation factor RimP (172 aa).

The protein belongs to the RimP family.

It localises to the cytoplasm. Required for maturation of 30S ribosomal subunits. This is Ribosome maturation factor RimP from Chlorobium phaeovibrioides (strain DSM 265 / 1930) (Prosthecochloris vibrioformis (strain DSM 265)).